We begin with the raw amino-acid sequence, 221 residues long: Queuosine precursor transporter (221 aa).

Residues 1-12 are Cytoplasmic-facing; that stretch reads MNVFSQTQRYKA. The helical transmembrane segment at 13–33 threads the bilayer; sequence LFWLSLFHLLVITSSNYLVQL. Position 34 (Pro-34) is a topological domain, periplasmic. Residues 35-55 traverse the membrane as a helical segment; it reads VSILGFHTTWGAFSFPFIFLA. Topologically, residues 56 to 70 are cytoplasmic; that stretch reads TDLTVRIFGAPLARR. A helical membrane pass occupies residues 71–91; it reads IIFAVMIPALLISYVISSLFY. At 92–97 the chain is on the periplasmic side; the sequence is MGSWQG. The chain crosses the membrane as a helical span at residues 98–118; that stretch reads FGALAHFNLFVARIATASFMA. The Cytoplasmic portion of the chain corresponds to 119 to 143; sequence YALGQILDVHVFNRLRQSRRWWLAP. A helical membrane pass occupies residues 144–164; the sequence is TASTLFGNVSDTLAFFFIAFW. Topologically, residues 165-184 are periplasmic; that stretch reads RSPDAFMAEHWMEIALVDYC. A helical transmembrane segment spans residues 185 to 205; sequence FKVLISIVFFLPMYGVLLNML. At 206–221 the chain is on the cytoplasmic side; the sequence is LKRLADKSEINALQAS.

It belongs to the vitamin uptake transporter (VUT/ECF) (TC 2.A.88) family. Q precursor transporter subfamily.

The protein localises to the cell inner membrane. Functionally, involved in the import of queuosine (Q) precursors, required for Q precursor salvage. Transports 7-cyano-7-deazaguanine (preQ(0)) and 7-aminomethyl-7-deazaguanine (preQ(1)), with a preference for preQ(0). This chain is Queuosine precursor transporter (yhhQ), found in Escherichia coli (strain K12).